The sequence spans 442 residues: Tryptophan synthase beta chain 2 (442 aa).

At lysine 110 the chain carries N6-(pyridoxal phosphate)lysine.

Belongs to the TrpB family. As to quaternary structure, tetramer of two alpha and two beta chains. Pyridoxal 5'-phosphate is required as a cofactor.

The catalysed reaction is (1S,2R)-1-C-(indol-3-yl)glycerol 3-phosphate + L-serine = D-glyceraldehyde 3-phosphate + L-tryptophan + H2O. Its pathway is amino-acid biosynthesis; L-tryptophan biosynthesis; L-tryptophan from chorismate: step 5/5. In terms of biological role, the beta subunit is responsible for the synthesis of L-tryptophan from indole and L-serine. In Thermococcus kodakarensis (strain ATCC BAA-918 / JCM 12380 / KOD1) (Pyrococcus kodakaraensis (strain KOD1)), this protein is Tryptophan synthase beta chain 2.